Reading from the N-terminus, the 60-residue chain is Large ribosomal subunit protein bL32 (60 aa).

The span at 1 to 16 (MAVPKKKTSKSRKNMR) shows a compositional bias: basic residues. A disordered region spans residues 1–20 (MAVPKKKTSKSRKNMRRAHD).

The protein belongs to the bacterial ribosomal protein bL32 family.

The chain is Large ribosomal subunit protein bL32 from Geobacter metallireducens (strain ATCC 53774 / DSM 7210 / GS-15).